The following is a 202-amino-acid chain: Syndecan-4 (202 aa).

Residues 1-23 form the signal peptide; it reads MAPVCLFAPLLLLLLGGFPVAPG. The Extracellular segment spans residues 24 to 149; that stretch reads ESIRETEVID…QGSNIFERTE (126 aa). Disordered regions lie at residues 42–76 and 89–138; these read YFSG…TEEP and LDNH…MSST. S44 is a glycosylation site (O-linked (Xyl...) (glycosaminoglycan) serine). A compositionally biased stretch (acidic residues) spans 48–62; that stretch reads PDDEDAGGLEQDSDF. O-linked (Xyl...) (glycosaminoglycan) serine glycans are attached at residues S65 and S67. Positions 105–121 are enriched in basic and acidic residues; sequence SEPKELEENEVIPKRVP. Residues 150-174 form a helical membrane-spanning segment; that stretch reads VLAALIVGGVVGILFAVFLILLLVY. Over 175–202 the chain is Cytoplasmic; the sequence is RMKKKDEGSYDLGKKPIYKKAPTNEFYA.

It belongs to the syndecan proteoglycan family. In terms of assembly, homodimer. Interacts with CDCP1 and SDCBP. Interacts (via its cytoplasmic domain) with GIPC (via its PDZ domain). Interacts (via its cytoplasmic domain) with NUDT16L1. Interacts with DNM2; this interaction is markedly enhanced at focal ahesion site upon induction of focal adhesions and stress-fiber formation. Shedding is enhanced by a number of factors such as heparanase, thrombin or EGF. Also by stress and wound healing. PMA-mediated shedding is inhibited by TIMP3. In terms of processing, O-glycosylated; contains both chondroitin sulfate and heparan sulfate. Ser-44, Ser-65 and Ser-67 can all be modified by either chondroitin sulfate or heparan sulfate, and the protein exists in forms that contain only chondroitin sulfate, only heparan sulfate and both chondroitin sulfate and heparan sulfate.

It localises to the membrane. The protein localises to the secreted. In terms of biological role, cell surface proteoglycan which regulates exosome biogenesis in concert with SDCBP and PDCD6IP. The sequence is that of Syndecan-4 from Rattus norvegicus (Rat).